A 507-amino-acid chain; its full sequence is ATP synthase subunit alpha, chloroplastic (507 aa).

Residue 170 to 177 (GDRQTGKT) participates in ATP binding.

This sequence belongs to the ATPase alpha/beta chains family. As to quaternary structure, F-type ATPases have 2 components, CF(1) - the catalytic core - and CF(0) - the membrane proton channel. CF(1) has five subunits: alpha(3), beta(3), gamma(1), delta(1), epsilon(1). CF(0) has four main subunits: a, b, b' and c.

The protein resides in the plastid. The protein localises to the chloroplast thylakoid membrane. It carries out the reaction ATP + H2O + 4 H(+)(in) = ADP + phosphate + 5 H(+)(out). Its function is as follows. Produces ATP from ADP in the presence of a proton gradient across the membrane. The alpha chain is a regulatory subunit. The polypeptide is ATP synthase subunit alpha, chloroplastic (Ranunculus macranthus (Large buttercup)).